Reading from the N-terminus, the 240-residue chain is MAGPPRLLLLPLLLALARGLPGALAAQEVQQSPHCTTVPVGASVNITCSTSGGLRGIYLRQLGPQPQDIIYYEDGVVPTTDRRFRGRIDFSGSQDNLTITMHRLQLSDTGTYTCQAITEVNVYGSGTLVLVTEEQSQGWHRCSDAPPRASALPAPPTGSALPDPQTASALPDPPAASALPAALAVISFLLGLGLGVACVLARTQIKKLCSWRDKNSAACVVYEDMSHSRCNTLSSPNQYQ.

Residues 1-25 (MAGPPRLLLLPLLLALARGLPGALA) form the signal peptide. The Ig-like domain occupies 26–130 (AQEVQQSPHC…NVYGSGTLVL (105 aa)). Over 26–180 (AQEVQQSPHC…PDPPAASALP (155 aa)) the chain is Extracellular. Intrachain disulfides connect cysteine 35–cysteine 142 and cysteine 48–cysteine 114. N-linked (GlcNAc...) asparagine glycans are attached at residues asparagine 45 and asparagine 96. The segment at 140 to 172 (HRCSDAPPRASALPAPPTGSALPDPQTASALPD) is disordered. 4 consecutive repeat copies span residues 145–153 (APPRASALP), 154–162 (APPTGSALP), 163–171 (DPQTASALP), and 172–180 (DPPAASALP). The interval 145 to 180 (APPRASALPAPPTGSALPDPQTASALPDPPAASALP) is 4 X 9 AA tandem repeats, potential spacer function. Residues 181-201 (AALAVISFLLGLGLGVACVLA) form a helical membrane-spanning segment. The S-palmitoyl cysteine moiety is linked to residue cysteine 198. Topologically, residues 202 to 240 (RTQIKKLCSWRDKNSAACVVYEDMSHSRCNTLSSPNQYQ) are cytoplasmic.

Interacts with SECTM1. Expressed on T-cells and natural killer (NK) cells and their precursors.

The protein localises to the membrane. In terms of biological role, transmembrane glycoprotein expressed by T-cells and natural killer (NK) cells and their precursors. Plays a costimulatory role in T-cell activation upon binding to its ligand K12/SECTM1. In turn, mediates the production of cytokines such as IL-2. On resting NK-cells, CD7 activation results in a significant induction of interferon-gamma levels. This Homo sapiens (Human) protein is T-cell antigen CD7 (CD7).